Reading from the N-terminus, the 476-residue chain is Protein transport protein Sec61 subunit alpha (476 aa).

Residues 2 to 33 lie on the Cytoplasmic side of the membrane; it reads GIKFLEVIKPFCAVLPEIQKPERKIQFREKVL. A helical membrane pass occupies residues 34 to 53; that stretch reads WTAITLFIFLVCCQIPLFGI. Residues 54 to 76 are Lumenal-facing; the sequence is MSSDSADPFYWMRVILASNRGTL. The helical transmembrane segment at 77–96 threads the bilayer; the sequence is MELGISPIVTSGLIMQLLAG. Topologically, residues 97-117 are cytoplasmic; it reads AKIIEVGDTPKDRALFNGAQK. A helical membrane pass occupies residues 118–138; sequence LFGMIITIGQAIVYVMTGMYG. Topologically, residues 139–144 are lumenal; that stretch reads DPSEMG. The helical transmembrane segment at 145-165 threads the bilayer; it reads AGICLLIIIQLFVAGLIVLLL. Over 166-172 the chain is Cytoplasmic; it reads DELLQKG. The helical transmembrane segment at 173–193 threads the bilayer; that stretch reads YGLGSGISLFIATNICETIVW. Topologically, residues 194–240 are lumenal; the sequence is KAFSPTTVNTGRGTEFEGAIIALFHLLATRTDKVRALREAFYRQNLP. A helical transmembrane segment spans residues 241–261; the sequence is NILNLIATVFVFAVVIYFQGF. Residues 262 to 288 lie on the Cytoplasmic side of the membrane; sequence RVDLPIKSARYRGQYNTYPIKLFYTSN. Residues 289–309 traverse the membrane as a helical segment; the sequence is IPIILQSALVSNLYVISQMLS. The Lumenal segment spans residues 310 to 354; it reads TRFSGNFLVNLLGTWSDATSGGPARAYPVAGLCYYLSPPESFGSV. Residues 355 to 375 form a helical membrane-spanning segment; it reads LDDPVHAAIYIVFMLGSCAFF. Topologically, residues 376–420 are cytoplasmic; it reads SKTWIEVSGSSAKDVAKQLKEQQMVMRGHRETSMVHELNRYIPTA. A helical membrane pass occupies residues 421 to 441; sequence AAFGGLCIGGLSVMADFLGAI. Over 442-445 the chain is Lumenal; that stretch reads GSGT. Residues 446-462 traverse the membrane as a helical segment; sequence GILLAVTIIYQYFEIFV. At 463 to 476 the chain is on the cytoplasmic side; that stretch reads KEQSEMGSMGALLF.

It belongs to the SecY/SEC61-alpha family. As to quaternary structure, the SEC61 channel-forming translocon complex consists of channel-forming core components SEC61A1, SEC61B and SEC61G and different auxiliary components such as SEC62 and SEC63. The SEC61 channel associates with the multi-pass translocon (MPT) complex.

The protein resides in the endoplasmic reticulum membrane. Functionally, component of SEC61 channel-forming translocon complex that mediates transport of signal peptide-containing precursor polypeptides across the endoplasmic reticulum (ER). Forms a ribosome receptor and a gated pore in the ER membrane, both functions required for cotranslational translocation of nascent polypeptides. May cooperate with auxiliary protein SEC62, SEC63 and HSPA5/BiP to enable post-translational transport of small presecretory proteins. The SEC61 channel is also involved in ER membrane insertion of transmembrane proteins: it mediates membrane insertion of the first few transmembrane segments of proteins, while insertion of subsequent transmembrane regions of multi-pass membrane proteins is mediated by the multi-pass translocon (MPT) complex. This is Protein transport protein Sec61 subunit alpha (sec61a) from Dissostichus mawsoni (Antarctic cod).